Here is a 148-residue protein sequence, read N- to C-terminus: Hemoglobin subunit beta-4 (148 aa).

A Globin domain is found at 3–148 (DWTDPERSAI…VVSALGRQYH (146 aa)). Heme b-binding residues include His64 and His93.

It belongs to the globin family. As to quaternary structure, heterotetramer of two alpha chains and two beta chains. In terms of tissue distribution, red blood cells.

Functionally, involved in oxygen transport from gills to the various peripheral tissues. The polypeptide is Hemoglobin subunit beta-4 (hbb4) (Oncorhynchus mykiss (Rainbow trout)).